The following is a 322-amino-acid chain: Porphobilinogen deaminase (322 aa).

Cys252 is subject to S-(dipyrrolylmethanemethyl)cysteine.

It belongs to the HMBS family. Monomer. Dipyrromethane serves as cofactor.

The enzyme catalyses 4 porphobilinogen + H2O = hydroxymethylbilane + 4 NH4(+). It participates in porphyrin-containing compound metabolism; protoporphyrin-IX biosynthesis; coproporphyrinogen-III from 5-aminolevulinate: step 2/4. In terms of biological role, tetrapolymerization of the monopyrrole PBG into the hydroxymethylbilane pre-uroporphyrinogen in several discrete steps. The polypeptide is Porphobilinogen deaminase (Caulobacter vibrioides (strain ATCC 19089 / CIP 103742 / CB 15) (Caulobacter crescentus)).